The sequence spans 261 residues: Uridine-cytidine kinase 2 (261 aa).

Polar residues predominate over residues 1–16 (MAGDSEQTLQNHQQPN). The interval 1–24 (MAGDSEQTLQNHQQPNGGEPFLIG) is disordered. N-acetylalanine is present on Ala2. Residue 27-35 (GGTASGKSS) coordinates ATP. 6 residues coordinate substrate: Asp84, Tyr112, His117, Arg166, Arg176, and Gln184. Asp213 provides a ligand contact to ATP. The segment at 240-261 (GYLNGYTPSRKRQASESSSRPH) is disordered. Residue Ser254 is modified to Phosphoserine.

This sequence belongs to the uridine kinase family. In terms of assembly, homotetramer.

The enzyme catalyses uridine + ATP = UMP + ADP + H(+). It carries out the reaction cytidine + ATP = CMP + ADP + H(+). The protein operates within pyrimidine metabolism; CTP biosynthesis via salvage pathway; CTP from cytidine: step 1/3. It functions in the pathway pyrimidine metabolism; UMP biosynthesis via salvage pathway; UMP from uridine: step 1/1. Phosphorylates uridine and cytidine to uridine monophosphate and cytidine monophosphate. Does not phosphorylate deoxyribonucleosides or purine ribonucleosides. Can use ATP or GTP as a phosphate donor. The chain is Uridine-cytidine kinase 2 (Uck2) from Mus musculus (Mouse).